The sequence spans 229 residues: Ribonuclease 3 (229 aa).

Residues 5–127 form the RNase III domain; the sequence is LARLERKLGY…LIGAIYLDAD (123 aa). Glu40 contacts Mg(2+). Residue Asp44 is part of the active site. Mg(2+) contacts are provided by Asp113 and Glu116. Residue Glu116 is part of the active site. Residues 154–224 form the DRBM domain; it reads DPKTRLQEFL…AAAALIALGV (71 aa).

The protein belongs to the ribonuclease III family. In terms of assembly, homodimer. The cofactor is Mg(2+).

The protein localises to the cytoplasm. The catalysed reaction is Endonucleolytic cleavage to 5'-phosphomonoester.. Functionally, digests double-stranded RNA. Involved in the processing of primary rRNA transcript to yield the immediate precursors to the large and small rRNAs (23S and 16S). Processes some mRNAs, and tRNAs when they are encoded in the rRNA operon. Processes pre-crRNA and tracrRNA of type II CRISPR loci if present in the organism. This Pseudomonas putida (strain W619) protein is Ribonuclease 3.